A 418-amino-acid chain; its full sequence is Intracellular coagulation inhibitor 1 (418 aa).

A signal peptide spans 1-24; sequence MKLGDWKFCLLLFQLMFLTNVCLS. N-linked (GlcNAc...) asparagine glycosylation is found at asparagine 49 and asparagine 404.

This sequence belongs to the serpin family. In terms of assembly, monomer. Forms a covalent heterodimer with clotting factor C. Interacts with big defensin. N-glycosylated. As to expression, expressed in hemocytes (at protein level).

The protein localises to the secreted. Serine protease inhibitor that specifically inhibits clotting factor C. Does not inhibit clotting factor B or proclotting enzyme. This chain is Intracellular coagulation inhibitor 1, found in Tachypleus tridentatus (Japanese horseshoe crab).